Here is a 224-residue protein sequence, read N- to C-terminus: Serum amyloid P-component (224 aa).

An N-terminal signal peptide occupies residues methionine 1–cysteine 20. The Pentraxin (PTX) domain maps to lysine 25–aspartate 224. Asparagine 52 is a glycosylation site (N-linked (GlcNAc...) asparagine). Cysteine 56 and cysteine 115 are joined by a disulfide. Ca(2+)-binding residues include aspartate 78, asparagine 79, glutamate 156, glutamine 157, aspartate 158, and glutamine 168.

It belongs to the pentraxin family. As to quaternary structure, homopentamer. Pentraxin (or pentaxin) have a discoid arrangement of 5 non-covalently bound subunits. The cofactor is Ca(2+).

The protein resides in the secreted. This Mus musculus (Mouse) protein is Serum amyloid P-component (Apcs).